The chain runs to 724 residues: Phosphoribosylformylglycinamidine synthase subunit PurL (724 aa).

The active site involves His34. Tyr37 lines the ATP pocket. Glu78 contacts Mg(2+). Substrate-binding positions include 79-82 and Arg101; that span reads SHNH. His80 (proton acceptor) is an active-site residue. Asp102 lines the Mg(2+) pocket. Gln226 lines the substrate pocket. Residue Asp254 participates in Mg(2+) binding. 298–300 serves as a coordination point for substrate; that stretch reads ESQ. The ATP site is built by Asp480 and Gly517. Residue Asn518 coordinates Mg(2+). Ser520 serves as a coordination point for substrate.

This sequence belongs to the FGAMS family. In terms of assembly, monomer. Part of the FGAM synthase complex composed of 1 PurL, 1 PurQ and 2 PurS subunits.

Its subcellular location is the cytoplasm. It catalyses the reaction N(2)-formyl-N(1)-(5-phospho-beta-D-ribosyl)glycinamide + L-glutamine + ATP + H2O = 2-formamido-N(1)-(5-O-phospho-beta-D-ribosyl)acetamidine + L-glutamate + ADP + phosphate + H(+). It participates in purine metabolism; IMP biosynthesis via de novo pathway; 5-amino-1-(5-phospho-D-ribosyl)imidazole from N(2)-formyl-N(1)-(5-phospho-D-ribosyl)glycinamide: step 1/2. In terms of biological role, part of the phosphoribosylformylglycinamidine synthase complex involved in the purines biosynthetic pathway. Catalyzes the ATP-dependent conversion of formylglycinamide ribonucleotide (FGAR) and glutamine to yield formylglycinamidine ribonucleotide (FGAM) and glutamate. The FGAM synthase complex is composed of three subunits. PurQ produces an ammonia molecule by converting glutamine to glutamate. PurL transfers the ammonia molecule to FGAR to form FGAM in an ATP-dependent manner. PurS interacts with PurQ and PurL and is thought to assist in the transfer of the ammonia molecule from PurQ to PurL. In Methanopyrus kandleri (strain AV19 / DSM 6324 / JCM 9639 / NBRC 100938), this protein is Phosphoribosylformylglycinamidine synthase subunit PurL.